Here is a 324-residue protein sequence, read N- to C-terminus: Phospho-N-acetylmuramoyl-pentapeptide-transferase (324 aa).

Helical transmembrane passes span 5-25, 52-72, 77-97, 117-137, 147-167, 176-196, 203-223, 227-247, 250-270, and 302-322; these read VILF…PIFI, PTMG…VMTM, VSMN…LGFL, LIGQ…QGMP, LSFD…VGGS, LDGL…ILAW, VAIF…FNAH, VFMG…IAIL, LEIL…SVIL, and VVVT…YIEV.

The protein belongs to the glycosyltransferase 4 family. MraY subfamily. Mg(2+) serves as cofactor.

It is found in the cell membrane. It catalyses the reaction UDP-N-acetyl-alpha-D-muramoyl-L-alanyl-gamma-D-glutamyl-meso-2,6-diaminopimeloyl-D-alanyl-D-alanine + di-trans,octa-cis-undecaprenyl phosphate = di-trans,octa-cis-undecaprenyl diphospho-N-acetyl-alpha-D-muramoyl-L-alanyl-D-glutamyl-meso-2,6-diaminopimeloyl-D-alanyl-D-alanine + UMP. Its pathway is cell wall biogenesis; peptidoglycan biosynthesis. In terms of biological role, catalyzes the initial step of the lipid cycle reactions in the biosynthesis of the cell wall peptidoglycan: transfers peptidoglycan precursor phospho-MurNAc-pentapeptide from UDP-MurNAc-pentapeptide onto the lipid carrier undecaprenyl phosphate, yielding undecaprenyl-pyrophosphoryl-MurNAc-pentapeptide, known as lipid I. In Bacillus licheniformis (strain ATCC 14580 / DSM 13 / JCM 2505 / CCUG 7422 / NBRC 12200 / NCIMB 9375 / NCTC 10341 / NRRL NRS-1264 / Gibson 46), this protein is Phospho-N-acetylmuramoyl-pentapeptide-transferase.